Here is a 478-residue protein sequence, read N- to C-terminus: Muscarinic acetylcholine receptor M4 (478 aa).

Residues 1–30 (MXNFTPVNGSSANQSVRLVTAAHNHLETVE) are Extracellular-facing. Residues Asn8 and Asn13 are each glycosylated (N-linked (GlcNAc...) asparagine). The helical transmembrane segment at 31–53 (MVFIATVTGSLSLVTVVGNILVM) threads the bilayer. Residues 54 to 67 (LSIKVNRQLQTVNN) lie on the Cytoplasmic side of the membrane. Residues 68–88 (YFLFSLGCADLIIGAFSMNLY) traverse the membrane as a helical segment. The Extracellular portion of the chain corresponds to 89–105 (TLYIIKGYWPLGAVVCD). The cysteines at positions 104 and 184 are disulfide-linked. The helical transmembrane segment at 106–127 (LWLALDYVVSNASVMNLLIISF) threads the bilayer. The Cytoplasmic portion of the chain corresponds to 128–147 (DRYFCVTKPLTYPARRTTKM). Residues 148 to 170 (AGLMIAAAWVLSFVLWAPAILFW) traverse the membrane as a helical segment. Over 171–192 (QFVVGKRTVPDNQCFIQFLSNP) the chain is Extracellular. Residues 193–215 (AVTFGTAIAAFYLPVVIMTVLYI) form a helical membrane-spanning segment. Residues 216–400 (HISLASRSRV…AARERKVTRT (185 aa)) lie on the Cytoplasmic side of the membrane. The segment at 271-333 (LEEAPPPALP…APTLQPRTLN (63 aa)) is disordered. Over residues 274–285 (APPPALPPPPRP) the composition is skewed to pro residues. Positions 293 to 303 (NESSSGSATQN) are enriched in polar residues. The span at 310–332 (TELSTAEATTPALPAPTLQPRTL) shows a compositional bias: low complexity. The helical transmembrane segment at 401 to 421 (IFAILLAFILTWTPYNVMVLV) threads the bilayer. At 422-435 (NTFCQSCIPERVWS) the chain is on the extracellular side. Residues 436 to 455 (IGYWLCYVNSTINPACYALC) traverse the membrane as a helical segment. Residues 456 to 478 (NATFKKTFRHLLLCQYRNIGTAR) are Cytoplasmic-facing. 3 positions are modified to phosphothreonine: Thr458, Thr462, and Thr476.

This sequence belongs to the G-protein coupled receptor 1 family. Muscarinic acetylcholine receptor subfamily. CHRM4 sub-subfamily.

The protein resides in the cell membrane. Its subcellular location is the postsynaptic cell membrane. Its function is as follows. The muscarinic acetylcholine receptor mediates various cellular responses, including inhibition of adenylate cyclase, breakdown of phosphoinositides and modulation of potassium channels through the action of G proteins. Primary transducing effect is inhibition of adenylate cyclase. The sequence is that of Muscarinic acetylcholine receptor M4 (Chrm4) from Rattus norvegicus (Rat).